Reading from the N-terminus, the 145-residue chain is Large ribosomal subunit protein uL24 (145 aa).

Disordered regions lie at residues Met-1–Ala-21 and Lys-122–Glu-145. A Glycyl lysine isopeptide (Lys-Gly) (interchain with G-Cter in SUMO2) cross-link involves residue Lys-136. A Phosphothreonine modification is found at Thr-139.

The protein belongs to the universal ribosomal protein uL24 family. Component of the large ribosomal subunit. Interacts with DHX33. In terms of processing, ufmylated by UFL1 in response to endoplasmic reticulum stress, promoting reticulophagy of endoplasmic reticulum sheets.

The protein resides in the cytoplasm. Its function is as follows. Component of the large ribosomal subunit. The ribosome is a large ribonucleoprotein complex responsible for the synthesis of proteins in the cell. The sequence is that of Large ribosomal subunit protein uL24 (RPL26) from Bos taurus (Bovine).